A 490-amino-acid chain; its full sequence is Hydroxysteroid dehydrogenase-like protein 2 (490 aa).

NADP(+) is bound by residues 17 to 23 (GASRGIG), lysine 42, and aspartate 74. Lysine 42 is modified (N6-(2-hydroxyisobutyryl)lysine). The residue at position 116 (lysine 116) is an N6-acetyllysine. Tyrosine 168 functions as the Proton acceptor in the catalytic mechanism. Lysine 172 is an NADP(+) binding site. Basic and acidic residues predominate over residues 282–301 (MEEKESNDSVPEVKEEKLQL). Residues 282–370 (MEEKESNDSV…PRQQPQPFVQ (89 aa)) are disordered. The span at 302 to 367 (QEESQLQKQP…QPRPRQQPQP (66 aa)) shows a compositional bias: low complexity. The 108-residue stretch at 380 to 487 (GAVEETFRIV…KLEKLMTQMN (108 aa)) folds into the SCP2 domain. Residue lysine 390 is modified to N6-succinyllysine.

Belongs to the short-chain dehydrogenases/reductases (SDR) family. In terms of tissue distribution, widely expressed.

The protein localises to the peroxisome. It localises to the mitochondrion. Its function is as follows. Has apparently no steroid dehydrogenase activity. Controls bile acid (BA) and lipid metabolism in response to nutritional cues. The polypeptide is Hydroxysteroid dehydrogenase-like protein 2 (Hsdl2) (Mus musculus (Mouse)).